A 115-amino-acid chain; its full sequence is uncharacterized protein (115 aa).

This is an uncharacterized protein from Caenorhabditis elegans.